The primary structure comprises 427 residues: Male abnormal protein mab-31 (427 aa).

The segment at 68–102 is disordered; that stretch reads PIGTGRFPNPSPPRSSSGTNTPIRKTPGSRPDRGK.

Its subcellular location is the nucleus. In terms of biological role, putative transcription factor. Acts in a TGF-beta-like pathway during development of male-specific genital sensilla (simple sense organs), known as rays. Involved in production of reactive oxygen species (ROS), acting downstream of the TGF-beta-like dbl-1 signaling pathway. Involved in locomotory behavior. In Caenorhabditis elegans, this protein is Male abnormal protein mab-31.